The chain runs to 399 residues: Acetate kinase (399 aa).

N9 is a Mg(2+) binding site. Residue K16 coordinates ATP. R90 contacts substrate. D147 acts as the Proton donor/acceptor in catalysis. ATP is bound by residues 207–211, 281–283, and 333–337; these read HLGNG, DFR, and GVGEN. E387 lines the Mg(2+) pocket.

The protein belongs to the acetokinase family. As to quaternary structure, homodimer. Mg(2+) serves as cofactor. The cofactor is Mn(2+).

The protein localises to the cytoplasm. It carries out the reaction acetate + ATP = acetyl phosphate + ADP. The protein operates within metabolic intermediate biosynthesis; acetyl-CoA biosynthesis; acetyl-CoA from acetate: step 1/2. In terms of biological role, catalyzes the formation of acetyl phosphate from acetate and ATP. Can also catalyze the reverse reaction. This Mycobacterium sp. (strain KMS) protein is Acetate kinase.